Consider the following 330-residue polypeptide: DNA primase small subunit PriS (330 aa).

Catalysis depends on residues D101 and D103. Residues C116, C119, C128, and D131 each coordinate Zn(2+). The active site involves D235.

Belongs to the eukaryotic-type primase small subunit family. Heterodimer of a small subunit (PriS) and a large subunit (PriL). The cofactor is Mg(2+). Mn(2+) is required as a cofactor.

In terms of biological role, catalytic subunit of DNA primase, an RNA polymerase that catalyzes the synthesis of short RNA molecules used as primers for DNA polymerase during DNA replication. The small subunit contains the primase catalytic core and has DNA synthesis activity on its own. Binding to the large subunit stabilizes and modulates the activity, increasing the rate of DNA synthesis while decreasing the length of the DNA fragments, and conferring RNA synthesis capability. The DNA polymerase activity may enable DNA primase to also catalyze primer extension after primer synthesis. May also play a role in DNA repair. Possesses a template-independent 3'-terminal nucleotidyl transferase activity. The polypeptide is DNA primase small subunit PriS (Saccharolobus solfataricus (strain ATCC 35092 / DSM 1617 / JCM 11322 / P2) (Sulfolobus solfataricus)).